Consider the following 399-residue polypeptide: MAAKAAALSSSPFVSSRRLSSPAASLRARTPRCVMGSEQVRVVVEEEGKTKKRMGVAEPRSAPPAVWTPRAPAQEARLAALRTDGRDSRLKIFSGTANRPLAQEIASYLGVDLGKVLIKRFADGEIYVQLQESVRGCDVFLVQPTCSPVNENLMELFVMIDACRRASARSITVVIPYFGYARADRKAQGREAITAKLSANLLTEAGSDRVIVCDIHSTQALGYFDIPVDHIHGQPVILDYLASKTISKDLVVVSPDVGGVVRARAFAKKLSDAPLAIVDKRRQGHNMSEVMHLIGDVKGKVAIMVDDMIDTAGTITSAAALLKQEGAEAVYACSTHAVFSPPAIERLSGGIFEEVIVTNSILLPEHKCFPQLTVLSMANLVAETIWHVHRDGSVSSIFQ.

A chloroplast-targeting transit peptide spans 1–32 (MAAKAAALSSSPFVSSRRLSSPAASLRARTPR). 4 residues coordinate Mg(2+): D214, H216, D225, and D229. The segment at 299–314 (GKVAIMVDDMIDTAGT) is binding of phosphoribosylpyrophosphate.

Belongs to the ribose-phosphate pyrophosphokinase family. Mg(2+) serves as cofactor.

It is found in the plastid. Its subcellular location is the chloroplast. It catalyses the reaction D-ribose 5-phosphate + ATP = 5-phospho-alpha-D-ribose 1-diphosphate + AMP + H(+). This is Ribose-phosphate pyrophosphokinase 2, chloroplastic from Oryza sativa subsp. japonica (Rice).